A 1026-amino-acid polypeptide reads, in one-letter code: Multidrug resistance protein MdtC (1026 aa).

The next 11 membrane-spanning stretches (helical) occupy residues Ile15–Ala35, Glu333–Leu353, Leu360–Cys380, Leu387–Leu407, Val431–Leu451, Phe463–Pro483, Leu528–Pro548, Leu853–Ser873, Leu897–Val917, Pro953–Gly973, and Ile984–Val1004.

The protein belongs to the resistance-nodulation-cell division (RND) (TC 2.A.6) family. MdtC subfamily. Part of a tripartite efflux system composed of MdtA, MdtB and MdtC. MdtC forms a heteromultimer with MdtB.

It localises to the cell inner membrane. The chain is Multidrug resistance protein MdtC from Salmonella choleraesuis (strain SC-B67).